The sequence spans 139 residues: D-ribose pyranase (139 aa).

Residue histidine 20 is the Proton donor of the active site. Substrate contacts are provided by residues aspartate 28, histidine 106, and 128-130 (YAN).

This sequence belongs to the RbsD / FucU family. RbsD subfamily. Homodecamer.

The protein resides in the cytoplasm. It catalyses the reaction beta-D-ribopyranose = beta-D-ribofuranose. Its pathway is carbohydrate metabolism; D-ribose degradation; D-ribose 5-phosphate from beta-D-ribopyranose: step 1/2. In terms of biological role, catalyzes the interconversion of beta-pyran and beta-furan forms of D-ribose. In Aeromonas hydrophila subsp. hydrophila (strain ATCC 7966 / DSM 30187 / BCRC 13018 / CCUG 14551 / JCM 1027 / KCTC 2358 / NCIMB 9240 / NCTC 8049), this protein is D-ribose pyranase.